The primary structure comprises 85 residues: Large ribosomal subunit protein bL27 (85 aa).

Positions 1 to 23 (MAHKKAGGSSRNGRDSESKRLGV) are disordered.

This sequence belongs to the bacterial ribosomal protein bL27 family.

This chain is Large ribosomal subunit protein bL27, found in Methylococcus capsulatus (strain ATCC 33009 / NCIMB 11132 / Bath).